A 192-amino-acid chain; its full sequence is Large ribosomal subunit protein bL9 (192 aa).

Residues 172-192 (DALRPEDFFDPEADGVDEDEA) are disordered. Over residues 179–192 (FFDPEADGVDEDEA) the composition is skewed to acidic residues.

The protein belongs to the bacterial ribosomal protein bL9 family.

Binds to the 23S rRNA. The sequence is that of Large ribosomal subunit protein bL9 from Rhizobium leguminosarum bv. trifolii (strain WSM2304).